The primary structure comprises 121 residues: Small ribosomal subunit protein uS13 (121 aa).

A disordered region spans residues 92–121 (RKGLPMRGQRTRTNARTRKGPRRAAQALKK).

The protein belongs to the universal ribosomal protein uS13 family. In terms of assembly, part of the 30S ribosomal subunit. Forms a loose heterodimer with protein S19. Forms two bridges to the 50S subunit in the 70S ribosome.

Its function is as follows. Located at the top of the head of the 30S subunit, it contacts several helices of the 16S rRNA. In the 70S ribosome it contacts the 23S rRNA (bridge B1a) and protein L5 of the 50S subunit (bridge B1b), connecting the 2 subunits; these bridges are implicated in subunit movement. Contacts the tRNAs in the A and P-sites. In Burkholderia cenocepacia (strain ATCC BAA-245 / DSM 16553 / LMG 16656 / NCTC 13227 / J2315 / CF5610) (Burkholderia cepacia (strain J2315)), this protein is Small ribosomal subunit protein uS13.